Reading from the N-terminus, the 324-residue chain is MTGIKTTGEKKMMFFSGRAHPELAEEVAHKLGVGVVPTKAFDFANGEIYVRYQESARGADCFLIQSHTAPINKWIMEQLIMIDALKRASARSITVIVPFYGYARQDKKHRGREPISARLIADLMKTAGADRILTVDLHTDQIQGFFDGPVDHLFALPILADYVGAKVDRSKLTVVSPDAGRVRVADRWCDRLDAPLAIVHKRRDKDVANQVTVHEVVGDVKGRVCVLVDDMIDTGGTICAAADALFAHGAEDVIVTATHGVLSGPAADRLKNSKVSEFVFTDTLPTPGELELDKITVLSIAPTIANAVREVFEDGSVTSLFDEQ.

ATP contacts are provided by residues 45-47 (NGE) and 104-105 (RQ). 2 residues coordinate Mg(2+): histidine 138 and aspartate 178. Lysine 201 is an active-site residue. Residues arginine 203, aspartate 229, and 233-237 (DTGGT) each bind D-ribose 5-phosphate.

The protein belongs to the ribose-phosphate pyrophosphokinase family. Class I subfamily. As to quaternary structure, homohexamer. The cofactor is Mg(2+).

The protein resides in the cytoplasm. It carries out the reaction D-ribose 5-phosphate + ATP = 5-phospho-alpha-D-ribose 1-diphosphate + AMP + H(+). It functions in the pathway metabolic intermediate biosynthesis; 5-phospho-alpha-D-ribose 1-diphosphate biosynthesis; 5-phospho-alpha-D-ribose 1-diphosphate from D-ribose 5-phosphate (route I): step 1/1. Involved in the biosynthesis of the central metabolite phospho-alpha-D-ribosyl-1-pyrophosphate (PRPP) via the transfer of pyrophosphoryl group from ATP to 1-hydroxyl of ribose-5-phosphate (Rib-5-P). In Streptomyces avermitilis (strain ATCC 31267 / DSM 46492 / JCM 5070 / NBRC 14893 / NCIMB 12804 / NRRL 8165 / MA-4680), this protein is Ribose-phosphate pyrophosphokinase.